Here is a 406-residue protein sequence, read N- to C-terminus: Endoplasmic reticulum resident protein 44 (406 aa).

Residues 1–29 form the signal peptide; it reads MNPAVFLSLADLRCSLLLLVTSIFTPITA. The region spanning 30 to 138 is the Thioredoxin domain; that stretch reads EIASLDSENI…VKALADYIRQ (109 aa). 2 disulfide bridges follow: C189–C241 and C301–C318. The interval 236–285 is interaction with ITPR1; that stretch reads WIQDKCVPLVREITFENGEELTEEGLPFLILFHMKDDTESLEIFQNEVAR. Positions 360–387 are disordered; the sequence is FHHGPDPTDTAPGEQDQDVASSPPESSF. The segment covering 377-387 has biased composition (polar residues); the sequence is DVASSPPESSF. The short motif at 403–406 is the Prevents secretion from ER element; sequence RDEL.

As to quaternary structure, forms mixed disulfides with both ERO1A and ERO1B and cargo folding intermediates; the interactions with ERO1A and ERO1B result in their retention in the endoplasmic reticulum. Directly interacts with ITPR1 in a pH-, redox state- and calcium-dependent manner, but not with ITPR2 or ITPR3. The strength of this interaction inversely correlates with calcium concentration. Widely expressed.

It localises to the endoplasmic reticulum lumen. In terms of biological role, mediates thiol-dependent retention in the early secretory pathway, forming mixed disulfides with substrate proteins through its conserved CRFS motif. Inhibits the calcium channel activity of ITPR1. May have a role in the control of oxidative protein folding in the endoplasmic reticulum. Required to retain ERO1A and ERO1B in the endoplasmic reticulum. This chain is Endoplasmic reticulum resident protein 44 (Erp44), found in Mus musculus (Mouse).